Here is an 855-residue protein sequence, read N- to C-terminus: MNESFDKDFSNHTPMMQQYLKLKAQHPEILLFYRMGDFYELFYDDAKRASQLLDISLTKRGASAGEPIPMAGIPHHAVENYLAKLVNQGESVAICEQIGDPATSKGPVERKVVRIVTPGTISDEALLQERQDNLLAAIWQDGKGYGYATLDISSGRFRLSEPADRETMAAELQRTNPAELLYAEDFAEMALIEGRRGLRRRPLWEFEIDTARQQLNLQFGTRDLVGFGVENASRGLCAAGCLLQYVKDTQRTSLPHIRSITMERQQDSIIMDAATRRNLEITQNLAGGVENTLAAVLDCTVTPMGSRMLKRWLHMPVRNTDILRERQQTIGALQDTVSELQPVLRQVGDLERILARLALRTARPRDLARMRHAFQQLPELHAQLETVDSAPVQALRKKMGDFAELRDLLERAIIDAPPVLVRDGGVIAPGYHEELDEWRALADGATDYLDRLEIRERERTGLDTLKVGYNAVHGYYIQISRGQSHLAPINYVRRQTLKNAERYIIPELKEYEDKVLTSKGKALALEKQLYDELFDLLLPHLADLQQSANALAELDVLVNLAERAWTLNYTCPTFTDKPGIRITEGRHPVVEQVLNEPFIANPLNLSPQRRMLIITGPNMGGKSTYMRQTALIALLAYIGSYVPAQNVEIGPIDRIFTRVGAADDLASGRSTFMVEMTETANILHNATENSLVLMDEIGRGTSTYDGLSLAWACAENLANKIKALTLFATHYFELTQLPEKMEGVANVHLDALEHGDTIAFMHSVQDGAASKSYGLAVAALAGVPKEVIKRARQKLRELESISPNAAATQVDGTQMSLLAAPEETSPAVEALENLDPDSLTPRQALEWIYRLKSLV.

616 to 623 is an ATP binding site; that stretch reads GPNMGGKS.

The protein belongs to the DNA mismatch repair MutS family.

Functionally, this protein is involved in the repair of mismatches in DNA. It is possible that it carries out the mismatch recognition step. This protein has a weak ATPase activity. This Salmonella gallinarum (strain 287/91 / NCTC 13346) protein is DNA mismatch repair protein MutS.